Here is a 1227-residue protein sequence, read N- to C-terminus: Beta-alanyl-bioamine nonribosomal peptide synthetase (1227 aa).

Positions 1 to 850 are adenylation; sequence MPQSTAQLKS…FGKNSRDFKL (850 aa). Residues 851–931 form the Carrier domain; that stretch reads SRGRERARKV…SILTSLQNTE (81 aa). The residue at position 892 (serine 892) is an O-(pantetheine 4'-phosphoryl)serine. Residues 932–1227 are condensation; it reads SDFLKTQEPF…YMIKELNPSS (296 aa).

It belongs to the NRP synthetase family. The cofactor is pantetheine 4'-phosphate. In terms of tissue distribution, in virgin and paired males, bilaterally expressed in some cells in the head. During pairing, expressed throughout the ventral side of the body probably in ciliated neurons. Highly expressed in virgin females in cells throughout the body and only weakly expressed in sexually mature females. In virgin females, expressed in some cells in the head and on the dorsal surface and lateral edges of body.

The catalysed reaction is tryptamine + beta-alanine + ATP = beta-alanyl-tryptamine + AMP + diphosphate + H(+). It carries out the reaction beta-alanine + ATP + H(+) = beta-alanyl-5'-AMP + diphosphate. It catalyses the reaction beta-alanyl-5'-AMP + holo-[peptidyl-carrier protein] = beta-alanyl-[peptidyl-carrier protein] + AMP + H(+). The enzyme catalyses beta-alanyl-[peptidyl-carrier protein] + tryptamine = beta-alanyl-tryptamine + holo-[peptidyl-carrier protein] + H(+). Its function is as follows. Catalyzes the condensation of beta-alanine with tryptamine to form beta-alanyl-tryptamine (BATT). Beta-alanyl-tryptamine is an essential pheromone produced by the male that stimulates female sexual development during pairing. This is Beta-alanyl-bioamine nonribosomal peptide synthetase from Schistosoma mansoni (Blood fluke).